A 340-amino-acid chain; its full sequence is NAD kinase (340 aa).

D66 functions as the Proton acceptor in the catalytic mechanism. NAD(+) contacts are provided by residues 66 to 67, R71, 141 to 142, K152, D171, 182 to 187, and A206; these read DG, ND, and TAYAFS. Residues 321 to 340 form a disordered region; that stretch reads AGVAGTEPDKPGERDGKAGS. A compositionally biased stretch (basic and acidic residues) spans 327–340; the sequence is EPDKPGERDGKAGS.

The protein belongs to the NAD kinase family. A divalent metal cation is required as a cofactor.

It localises to the cytoplasm. It carries out the reaction NAD(+) + ATP = ADP + NADP(+) + H(+). Its function is as follows. Involved in the regulation of the intracellular balance of NAD and NADP, and is a key enzyme in the biosynthesis of NADP. Catalyzes specifically the phosphorylation on 2'-hydroxyl of the adenosine moiety of NAD to yield NADP. This is NAD kinase from Bifidobacterium longum (strain DJO10A).